We begin with the raw amino-acid sequence, 297 residues long: N-acetylmuramic acid 6-phosphate etherase (297 aa).

Residues 55–218 enclose the SIS domain; sequence AAAALKSGGR…STGAMVKFGK (164 aa). Glu83 serves as the catalytic Proton donor. Glu114 is a catalytic residue.

The protein belongs to the GCKR-like family. MurNAc-6-P etherase subfamily. Homodimer.

The catalysed reaction is N-acetyl-D-muramate 6-phosphate + H2O = N-acetyl-D-glucosamine 6-phosphate + (R)-lactate. The protein operates within amino-sugar metabolism; 1,6-anhydro-N-acetylmuramate degradation. It participates in amino-sugar metabolism; N-acetylmuramate degradation. Its pathway is cell wall biogenesis; peptidoglycan recycling. In terms of biological role, specifically catalyzes the cleavage of the D-lactyl ether substituent of MurNAc 6-phosphate, producing GlcNAc 6-phosphate and D-lactate. Together with AnmK, is also required for the utilization of anhydro-N-acetylmuramic acid (anhMurNAc) either imported from the medium or derived from its own cell wall murein, and thus plays a role in cell wall recycling. The sequence is that of N-acetylmuramic acid 6-phosphate etherase from Salmonella schwarzengrund (strain CVM19633).